We begin with the raw amino-acid sequence, 310 residues long: Nuclear hormone receptor family member nhr-89 (310 aa).

A DNA-binding region (nuclear receptor) is located at residues 5 to 79 (EGPCRVCHSV…SGMRRDCVRK (75 aa)). NR C4-type zinc fingers lie at residues 8–29 (CRVC…CMSC) and 43–67 (CPAN…YNKC). Residues 101 to 310 (KLSESYEELL…TLHQKYQIPF (210 aa)) form the NR LBD domain.

The protein belongs to the nuclear hormone receptor family.

Its subcellular location is the nucleus. Functionally, orphan nuclear receptor. This chain is Nuclear hormone receptor family member nhr-89 (nhr-89), found in Caenorhabditis elegans.